Reading from the N-terminus, the 67-residue chain is Probable Sec-independent protein translocase protein TatE (67 aa).

The chain crosses the membrane as a helical span at residues 1 to 21 (MEGISIAKLLIIGALIVLLFG). The tract at residues 46-67 (EDTSATRTTAEDVPAERVVHKD) is disordered.

Belongs to the TatA/E family. TatE subfamily.

The protein resides in the cell inner membrane. Functionally, part of the twin-arginine translocation (Tat) system that transports large folded proteins containing a characteristic twin-arginine motif in their signal peptide across membranes. TatE shares overlapping functions with TatA. The chain is Probable Sec-independent protein translocase protein TatE from Pantoea vagans (strain C9-1) (Pantoea agglomerans (strain C9-1)).